A 261-amino-acid chain; its full sequence is MAESHLQSSLITASQFFEIWLHFDADGSGYLEGKELQNLIQELLQARKKAGLELSPEMKTFVDQYGQRDDGKIGIVELAHVLPTEENFLLLFRCQQLKSCEEFMKTWRKYDTDHSGFIETEELKNFLKDLLEKANKTVDDTKLAEYTDLMLKLFDSNNDGKLELTEMARLLPVQENFLLKFQGIKMCGKEFNKAFELYDQDGNGYIDENELDALLKDLCEKNKQELDINNISTYKKNIMALSDGGKLYRTDLALILSAGDN.

Ala2 is modified (N-acetylalanine). An interaction with RANBP9 region spans residues 2–7 (AESHLQ). EF-hand domains follow at residues 11 to 46 (ITASQFFEIWLHFDADGSGYLEGKELQNLIQELLQA), 53 to 88 (ELSPEMKTFVDQYGQRDDGKIGIVELAHVLPTEENF), 98 to 133 (KSCEEFMKTWRKYDTDHSGFIETEELKNFLKDLLEK), 142 to 177 (KLAEYTDLMLKLFDSNNDGKLELTEMARLLPVQENF), and 186 to 221 (MCGKEFNKAFELYDQDGNGYIDENELDALLKDLCEK). Positions 24, 26, 28, 30, and 35 each coordinate Ca(2+). Residues Asp111, Asp113, Ser115, Glu122, Asp155, Asn157, Asp159, Lys161, Glu166, Asp199, Asp201, Asn203, Tyr205, and Glu210 each coordinate Ca(2+).

This sequence belongs to the calbindin family. As to quaternary structure, interacts with RANBP9.

Its function is as follows. Buffers cytosolic calcium. May stimulate a membrane Ca(2+)-ATPase and a 3',5'-cyclic nucleotide phosphodiesterase. This is Calbindin (Calb1) from Rattus norvegicus (Rat).